The following is a 172-amino-acid chain: ATP synthase subunit b (172 aa).

A helical transmembrane segment spans residues 12 to 32 (VGFNAGTMLFQLVAMLILLAL).

Belongs to the ATPase B chain family. In terms of assembly, F-type ATPases have 2 components, F(1) - the catalytic core - and F(0) - the membrane proton channel. F(1) has five subunits: alpha(3), beta(3), gamma(1), delta(1), epsilon(1). F(0) has three main subunits: a(1), b(2) and c(10-14). The alpha and beta chains form an alternating ring which encloses part of the gamma chain. F(1) is attached to F(0) by a central stalk formed by the gamma and epsilon chains, while a peripheral stalk is formed by the delta and b chains.

The protein localises to the cell membrane. In terms of biological role, f(1)F(0) ATP synthase produces ATP from ADP in the presence of a proton or sodium gradient. F-type ATPases consist of two structural domains, F(1) containing the extramembraneous catalytic core and F(0) containing the membrane proton channel, linked together by a central stalk and a peripheral stalk. During catalysis, ATP synthesis in the catalytic domain of F(1) is coupled via a rotary mechanism of the central stalk subunits to proton translocation. Functionally, component of the F(0) channel, it forms part of the peripheral stalk, linking F(1) to F(0). The protein is ATP synthase subunit b of Bacillus licheniformis (strain ATCC 14580 / DSM 13 / JCM 2505 / CCUG 7422 / NBRC 12200 / NCIMB 9375 / NCTC 10341 / NRRL NRS-1264 / Gibson 46).